The chain runs to 42 residues: Large ribosomal subunit protein bL34c (42 aa).

Belongs to the bacterial ribosomal protein bL34 family.

It is found in the plastid. It localises to the chloroplast. The chain is Large ribosomal subunit protein bL34c (rpl34) from Olisthodiscus luteus (Marine phytoflagellate).